The sequence spans 375 residues: tRNA-specific 2-thiouridylase MnmA (375 aa).

Residues 16 to 23 and Met-42 each bind ATP; that span reads GMSGGVDS. Residues 102–104 are interaction with target base in tRNA; that stretch reads NPD. Cys-107 acts as the Nucleophile in catalysis. An intrachain disulfide couples Cys-107 to Cys-203. An ATP-binding site is contributed by Gly-131. The interaction with tRNA stretch occupies residues 153-155; sequence KDQ. Cys-203 serves as the catalytic Cysteine persulfide intermediate. The interval 315 to 316 is interaction with tRNA; sequence RY.

Belongs to the MnmA/TRMU family.

The protein resides in the cytoplasm. It carries out the reaction S-sulfanyl-L-cysteinyl-[protein] + uridine(34) in tRNA + AH2 + ATP = 2-thiouridine(34) in tRNA + L-cysteinyl-[protein] + A + AMP + diphosphate + H(+). Catalyzes the 2-thiolation of uridine at the wobble position (U34) of tRNA, leading to the formation of s(2)U34. The sequence is that of tRNA-specific 2-thiouridylase MnmA from Pseudomonas paraeruginosa (strain DSM 24068 / PA7) (Pseudomonas aeruginosa (strain PA7)).